The sequence spans 251 residues: Orotidine 5'-phosphate decarboxylase (251 aa).

Residues aspartate 19, lysine 42, 69 to 78, threonine 133, arginine 194, glutamine 204, glycine 224, and arginine 225 each bind substrate; that span reads DLKFHDIPNT. Lysine 71 serves as the catalytic Proton donor.

Belongs to the OMP decarboxylase family. Type 1 subfamily. As to quaternary structure, homodimer.

The enzyme catalyses orotidine 5'-phosphate + H(+) = UMP + CO2. It participates in pyrimidine metabolism; UMP biosynthesis via de novo pathway; UMP from orotate: step 2/2. Functionally, catalyzes the decarboxylation of orotidine 5'-monophosphate (OMP) to uridine 5'-monophosphate (UMP). The polypeptide is Orotidine 5'-phosphate decarboxylase (Syntrophus aciditrophicus (strain SB)).